The primary structure comprises 96 residues: Putative pterin-4-alpha-carbinolamine dehydratase (96 aa).

This sequence belongs to the pterin-4-alpha-carbinolamine dehydratase family.

It catalyses the reaction (4aS,6R)-4a-hydroxy-L-erythro-5,6,7,8-tetrahydrobiopterin = (6R)-L-erythro-6,7-dihydrobiopterin + H2O. In Prochlorococcus marinus (strain MIT 9303), this protein is Putative pterin-4-alpha-carbinolamine dehydratase.